Here is a 249-residue protein sequence, read N- to C-terminus: 5'-nucleotidase SurE 2 (249 aa).

Residues Asp8, Asp9, Ser40, and Asn90 each coordinate a divalent metal cation.

It belongs to the SurE nucleotidase family. A divalent metal cation is required as a cofactor.

Its subcellular location is the cytoplasm. The enzyme catalyses a ribonucleoside 5'-phosphate + H2O = a ribonucleoside + phosphate. Nucleotidase that shows phosphatase activity on nucleoside 5'-monophosphates. The chain is 5'-nucleotidase SurE 2 from Pyrobaculum aerophilum (strain ATCC 51768 / DSM 7523 / JCM 9630 / CIP 104966 / NBRC 100827 / IM2).